A 624-amino-acid chain; its full sequence is Probable Xaa-Pro aminopeptidase P (624 aa).

Residues Asp-414, Asp-425, Glu-530, and Glu-544 each coordinate Mn(2+).

Belongs to the peptidase M24B family. It depends on Mn(2+) as a cofactor.

It carries out the reaction Release of any N-terminal amino acid, including proline, that is linked to proline, even from a dipeptide or tripeptide.. Catalyzes the removal of a penultimate prolyl residue from the N-termini of peptides. The protein is Probable Xaa-Pro aminopeptidase P (AMPP) of Chaetomium globosum (strain ATCC 6205 / CBS 148.51 / DSM 1962 / NBRC 6347 / NRRL 1970) (Soil fungus).